The following is a 314-amino-acid chain: tRNA dimethylallyltransferase (314 aa).

ATP is bound at residue 12–19 (GPTASGKT). 14–19 (TASGKT) contributes to the substrate binding site. Interaction with substrate tRNA regions lie at residues 37–40 (DSAL), 161–165 (QRIQR), and 244–249 (RCVGYR).

It belongs to the IPP transferase family. As to quaternary structure, monomer. Requires Mg(2+) as cofactor.

It carries out the reaction adenosine(37) in tRNA + dimethylallyl diphosphate = N(6)-dimethylallyladenosine(37) in tRNA + diphosphate. Its function is as follows. Catalyzes the transfer of a dimethylallyl group onto the adenine at position 37 in tRNAs that read codons beginning with uridine, leading to the formation of N6-(dimethylallyl)adenosine (i(6)A). The chain is tRNA dimethylallyltransferase from Janthinobacterium sp. (strain Marseille) (Minibacterium massiliensis).